The sequence spans 170 residues: Peptide deformylase-like (170 aa).

Glutamate 139 is a catalytic residue.

Belongs to the polypeptide deformylase family.

This chain is Peptide deformylase-like, found in Bradyrhizobium diazoefficiens (strain JCM 10833 / BCRC 13528 / IAM 13628 / NBRC 14792 / USDA 110).